An 80-amino-acid chain; its full sequence is DNA-directed RNA polymerase RPB10 homolog (80 aa).

Cys7, Cys10, Cys65, and Cys66 together coordinate Zn(2+).

Belongs to the archaeal RpoN/eukaryotic RPB10 RNA polymerase subunit family. Part of the viral DNA-directed RNA polymerase that consists of 8 polII-like subunits (RPB1, RPB2, RPB3, RPB5, RPB6, RPB7, RPB9, RPB10), a capping enzyme and a termination factor.

The protein localises to the host cytoplasm. Component of the DNA-directed RNA polymerase (RNAP) that catalyzes the transcription in the cytoplasm of viral DNA into RNA using the four ribonucleoside triphosphates as substrates. The chain is DNA-directed RNA polymerase RPB10 homolog from African swine fever virus (isolate Pig/Kenya/KEN-50/1950) (ASFV).